Consider the following 465-residue polypeptide: Polyadenylation factor subunit 2 (465 aa).

The segment covering Met1–Gln20 has biased composition (low complexity). Residues Met1–Tyr26 are disordered. WD repeat units lie at residues Ala133–Gln163, Ala175–Asn205, Gly217–Asp247, Lys259–Asp290, and Ala348–Thr378. The disordered stretch occupies residues Glu417–Ile465. The segment covering Asn454–Ile465 has biased composition (polar residues).

In terms of assembly, component of the cleavage and polyadenylation factor (CPF) complex, which is composed of at least PTI1, SYC1, SSU72, GLC7, MPE1, REF2, PFS2, PTA1, YSH1/BRR5, SWD2, CFT2/YDH1, YTH1, CFT1/YHH1, FIP1 and PAP1. Interacts with YSH1/BRR5, FIP1 and RNA14.

Its subcellular location is the nucleus. Functionally, integral and essential component of the cleavage and polyadenylation factor (CPF) complex, which plays a key role in polyadenylation-dependent pre-mRNA 3'-end formation and cooperates with cleavage factors including the CFIA complex and NAB4/CFIB. May bridge the CPF and CFIA complexes. In Saccharomyces cerevisiae (strain ATCC 204508 / S288c) (Baker's yeast), this protein is Polyadenylation factor subunit 2 (PFS2).